Consider the following 630-residue polypeptide: E3 ubiquitin-protein ligase TRIM41 (630 aa).

Residues 20 to 61 form an RING-type; degenerate zinc finger; it reads CAICLDYFTDPVSIGCGHNFCRVCVTQLWGGEDEEDRDELDR. The span at 51–75 shows a compositional bias: acidic residues; it reads EDEEDRDELDREEEEEEVGEEEEVE. 2 disordered regions span residues 51 to 97 and 148 to 176; these read EDEE…GDME and EDEDEEEEVLEEDEEEELDPITQLPPPPA. Residue threonine 85 is modified to Phosphothreonine. A compositionally biased stretch (acidic residues) spans 148–166; it reads EDEDEEEEVLEEDEEEELD. A B box-type zinc finger spans residues 222–263; sequence NEQGICPRHQEALKLFCEVDEEAICVVCRESRSHKQHSVVPL. Residues cysteine 227, histidine 230, cysteine 249, and histidine 255 each contribute to the Zn(2+) site. A Glycyl lysine isopeptide (Lys-Gly) (interchain with G-Cter in SUMO2) cross-link involves residue lysine 256. Residues 281–374 are a coiled coil; that stretch reads LRKHLEAVQK…AEAQERSQQG (94 aa). Residues 413 to 630 form the B30.2/SPRY domain; it reads LTDAIVRKMS…SKGTRIKLCP (218 aa). Serine 447 carries the post-translational modification Phosphoserine. The interval 503 to 535 is disordered; it reads ARESTHHKEKVGSGGSSVSSGDASSSRHHHRRR.

The protein belongs to the TRIM/RBCC family. Interacts with PRKCA. Interacts with NOD2. Interacts with TRIM17; this interaction prevents TRIM41 activity on ZSCAN2. Auto-ubiquitinated.

Its subcellular location is the cytoplasm. It localises to the nucleus. It carries out the reaction S-ubiquitinyl-[E2 ubiquitin-conjugating enzyme]-L-cysteine + [acceptor protein]-L-lysine = [E2 ubiquitin-conjugating enzyme]-L-cysteine + N(6)-ubiquitinyl-[acceptor protein]-L-lysine.. It participates in protein modification; protein ubiquitination. Functionally, E3 ligase that plays essential roles in innate antiviral response. Directly binds to influenza A virus or vesicular stomatitis virus nucleoproteins and targets them for ubiquitination and proteasomal degradation, thereby limiting viral infections. Activates the innate antiviral response by catalyzing monoubiquitination of CGAS, thereby activating CGAS. Also involved in innate antiviral response by mediating 'Lys-63'-linked polyubiquitylation of BCL10 which in turn hubs NEMO for activation of NF-kappa-B and IRF3 pathways. Catalyzes the ubiquitin-mediated degradation of other substrates including protein kinase C, ZSCAN21 or TOP3B suggesting additional roles besides its function in immune response. This Mus musculus (Mouse) protein is E3 ubiquitin-protein ligase TRIM41.